A 137-amino-acid polypeptide reads, in one-letter code: Nucleoside diphosphate kinase (137 aa).

ATP-binding residues include lysine 11, phenylalanine 59, arginine 87, threonine 93, arginine 104, and asparagine 114. Residue histidine 117 is the Pros-phosphohistidine intermediate of the active site.

This sequence belongs to the NDK family. Homotetramer. Mg(2+) serves as cofactor.

Its subcellular location is the cytoplasm. The catalysed reaction is a 2'-deoxyribonucleoside 5'-diphosphate + ATP = a 2'-deoxyribonucleoside 5'-triphosphate + ADP. It carries out the reaction a ribonucleoside 5'-diphosphate + ATP = a ribonucleoside 5'-triphosphate + ADP. Its function is as follows. Major role in the synthesis of nucleoside triphosphates other than ATP. The ATP gamma phosphate is transferred to the NDP beta phosphate via a ping-pong mechanism, using a phosphorylated active-site intermediate. This Frankia casuarinae (strain DSM 45818 / CECT 9043 / HFP020203 / CcI3) protein is Nucleoside diphosphate kinase.